Here is a 457-residue protein sequence, read N- to C-terminus: Siroheme synthase (457 aa).

Residues 1-204 (MDHLPIFCQL…NDQKAITETT (204 aa)) are precorrin-2 dehydrogenase /sirohydrochlorin ferrochelatase. NAD(+) is bound by residues 22–23 (DV) and 43–44 (LA). A Phosphoserine modification is found at S128. The segment at 216–457 (GEVVLVGAGP…RDKLNWFSNH (242 aa)) is uroporphyrinogen-III C-methyltransferase. P225 contributes to the S-adenosyl-L-methionine binding site. D248 acts as the Proton acceptor in catalysis. Residue K270 is the Proton donor of the active site. Residues 301–303 (GGD), I306, 331–332 (TA), M382, and G411 each bind S-adenosyl-L-methionine.

In the N-terminal section; belongs to the precorrin-2 dehydrogenase / sirohydrochlorin ferrochelatase family. This sequence in the C-terminal section; belongs to the precorrin methyltransferase family.

The enzyme catalyses uroporphyrinogen III + 2 S-adenosyl-L-methionine = precorrin-2 + 2 S-adenosyl-L-homocysteine + H(+). It carries out the reaction precorrin-2 + NAD(+) = sirohydrochlorin + NADH + 2 H(+). It catalyses the reaction siroheme + 2 H(+) = sirohydrochlorin + Fe(2+). It participates in cofactor biosynthesis; adenosylcobalamin biosynthesis; precorrin-2 from uroporphyrinogen III: step 1/1. The protein operates within cofactor biosynthesis; adenosylcobalamin biosynthesis; sirohydrochlorin from precorrin-2: step 1/1. It functions in the pathway porphyrin-containing compound metabolism; siroheme biosynthesis; precorrin-2 from uroporphyrinogen III: step 1/1. Its pathway is porphyrin-containing compound metabolism; siroheme biosynthesis; siroheme from sirohydrochlorin: step 1/1. It participates in porphyrin-containing compound metabolism; siroheme biosynthesis; sirohydrochlorin from precorrin-2: step 1/1. Multifunctional enzyme that catalyzes the SAM-dependent methylations of uroporphyrinogen III at position C-2 and C-7 to form precorrin-2 via precorrin-1. Then it catalyzes the NAD-dependent ring dehydrogenation of precorrin-2 to yield sirohydrochlorin. Finally, it catalyzes the ferrochelation of sirohydrochlorin to yield siroheme. This Escherichia coli O6:H1 (strain CFT073 / ATCC 700928 / UPEC) protein is Siroheme synthase.